The chain runs to 93 residues: Pyrimidine/purine nucleoside phosphorylase (93 aa).

The protein belongs to the nucleoside phosphorylase PpnP family.

The catalysed reaction is a purine D-ribonucleoside + phosphate = a purine nucleobase + alpha-D-ribose 1-phosphate. It catalyses the reaction adenosine + phosphate = alpha-D-ribose 1-phosphate + adenine. The enzyme catalyses cytidine + phosphate = cytosine + alpha-D-ribose 1-phosphate. It carries out the reaction guanosine + phosphate = alpha-D-ribose 1-phosphate + guanine. The catalysed reaction is inosine + phosphate = alpha-D-ribose 1-phosphate + hypoxanthine. It catalyses the reaction thymidine + phosphate = 2-deoxy-alpha-D-ribose 1-phosphate + thymine. The enzyme catalyses uridine + phosphate = alpha-D-ribose 1-phosphate + uracil. It carries out the reaction xanthosine + phosphate = alpha-D-ribose 1-phosphate + xanthine. Its function is as follows. Catalyzes the phosphorolysis of diverse nucleosides, yielding D-ribose 1-phosphate and the respective free bases. Can use uridine, adenosine, guanosine, cytidine, thymidine, inosine and xanthosine as substrates. Also catalyzes the reverse reactions. In Aliivibrio salmonicida (strain LFI1238) (Vibrio salmonicida (strain LFI1238)), this protein is Pyrimidine/purine nucleoside phosphorylase.